Here is a 1020-residue protein sequence, read N- to C-terminus: Glycine dehydrogenase (decarboxylating), mitochondrial (1020 aa).

The transit peptide at Met1–Arg35 directs the protein to the mitochondrion. A disordered region spans residues Arg21–Ala46. N6-acetyllysine is present on residues Lys447, Lys514, Lys648, and Lys664. An N6-(pyridoxal phosphate)lysine modification is found at Lys754.

It belongs to the GcvP family. Homodimer. Interacts with GCSH. The glycine cleavage system is composed of four proteins: P (GLDC), T (GCST), L (DLD) and H (GCSH). It depends on pyridoxal 5'-phosphate as a cofactor.

The protein localises to the mitochondrion. It carries out the reaction N(6)-[(R)-lipoyl]-L-lysyl-[glycine-cleavage complex H protein] + glycine + H(+) = N(6)-[(R)-S(8)-aminomethyldihydrolipoyl]-L-lysyl-[glycine-cleavage complex H protein] + CO2. With respect to regulation, stimulated by lipoic acid. Inhibited in presence of methylamine. Functionally, the glycine cleavage system catalyzes the degradation of glycine. The P protein (GLDC) binds the alpha-amino group of glycine through its pyridoxal phosphate cofactor; CO(2) is released and the remaining methylamine moiety is then transferred to the lipoamide cofactor of the H protein (GCSH). In Homo sapiens (Human), this protein is Glycine dehydrogenase (decarboxylating), mitochondrial.